The primary structure comprises 115 residues: Putative HNH nuclease YajD (115 aa).

The 49-residue stretch at 27–75 folds into the HNH domain; the sequence is CGRCSREFVYSNLRELTVHHIDHDHTNNPEDGSNWELLCLYCHDHEHSK.

The protein belongs to the HNH nuclease family.

The chain is Putative HNH nuclease YajD (yajD) from Salmonella typhi.